A 317-amino-acid polypeptide reads, in one-letter code: Proline-rich protein 2 (317 aa).

The signal sequence occupies residues 1–16 (MLVVLFTVALLALSSA). The interval 15-317 (SAQGPREELQ…PPQGRPQGPQ (303 aa)) is disordered. Residues 32 to 44 (QRPPPSGSQPRPP) show a composition bias toward pro residues. Asparagine 46 carries an N-linked (GlcNAc...) asparagine glycan. 2 stretches are compositionally biased toward pro residues: residues 51–183 (GPPP…PPAG) and 204–288 (QSPP…PTQG). Over residues 289–305 (PHPTGGPQQTPPLAGNP) the composition is skewed to low complexity. Pro residues predominate over residues 306-317 (QGPPQGRPQGPQ).

It localises to the secreted. This Mus musculus (Mouse) protein is Proline-rich protein 2 (Prp2).